The chain runs to 75 residues: Small ribosomal subunit protein bS18 (75 aa).

It belongs to the bacterial ribosomal protein bS18 family. Part of the 30S ribosomal subunit. Forms a tight heterodimer with protein bS6.

Its function is as follows. Binds as a heterodimer with protein bS6 to the central domain of the 16S rRNA, where it helps stabilize the platform of the 30S subunit. The sequence is that of Small ribosomal subunit protein bS18 from Shewanella frigidimarina (strain NCIMB 400).